A 278-amino-acid chain; its full sequence is MDTELLKTFLEVSRTRHFGRAAEALYLTQSAVSFRIRQLENQLGVNLFTRHRNNIRLTTAGEKLLPYAETLMNTWQAARKEVAHTSRHNEFSIGASASLWECMLNAWLGRLYQLQEPQSGLQFEARIAQRQSLVKQLHERQLDLLITTEAPKMDEFSSQLLGHFTLALYCSSPARKKSELNYLRLEWGPDFQQHETGLIAADEVPVLTTSSAELARQQLSALNGCSWLPVNWVNEKGGLHTVADSATLSRPLYAIWLQNSDKYSLICDLLKTDVLDDQ.

Positions 1–58 (MDTELLKTFLEVSRTRHFGRAAEALYLTQSAVSFRIRQLENQLGVNLFTRHRNNIRLT) constitute an HTH lysR-type domain. A DNA-binding region (H-T-H motif) is located at residues 18–37 (FGRAAEALYLTQSAVSFRIR).

This sequence belongs to the LysR transcriptional regulatory family.

In terms of biological role, negatively regulates the transcription of the flagellar master operon flhDC by binding to the upstream region of the operon. This chain is HTH-type transcriptional regulator HdfR, found in Salmonella schwarzengrund (strain CVM19633).